The sequence spans 92 residues: PqqA binding protein (92 aa).

It belongs to the PqqD family. As to quaternary structure, monomer. Interacts with PqqE.

It participates in cofactor biosynthesis; pyrroloquinoline quinone biosynthesis. In terms of biological role, functions as a PqqA binding protein and presents PqqA to PqqE, in the pyrroloquinoline quinone (PQQ) biosynthetic pathway. The chain is PqqA binding protein from Klebsiella pneumoniae (strain 342).